Reading from the N-terminus, the 154-residue chain is MNVYEGNLVGTGLKIGIVVARFNEFITSKLLSGALDGLKRHGVEEQHIDVAWVPGAFEIPLVAKKMAESKKYDAVITLGAVIRGATSHYDYVCNEVAKGTSHAALSSGVPVIFGVLTTDTIEQAIERAGTKAGNKGWEAALSAIEMANVMRTFS.

5-amino-6-(D-ribitylamino)uracil-binding positions include Phe-22, 56-58 (AFE), and 80-82 (AVI). (2S)-2-hydroxy-3-oxobutyl phosphate is bound at residue 85–86 (AT). Residue His-88 is the Proton donor of the active site. 5-amino-6-(D-ribitylamino)uracil is bound at residue Phe-113. Arg-127 contributes to the (2S)-2-hydroxy-3-oxobutyl phosphate binding site.

This sequence belongs to the DMRL synthase family. Forms an icosahedral capsid composed of 60 subunits, arranged as a dodecamer of pentamers.

It catalyses the reaction (2S)-2-hydroxy-3-oxobutyl phosphate + 5-amino-6-(D-ribitylamino)uracil = 6,7-dimethyl-8-(1-D-ribityl)lumazine + phosphate + 2 H2O + H(+). It participates in cofactor biosynthesis; riboflavin biosynthesis; riboflavin from 2-hydroxy-3-oxobutyl phosphate and 5-amino-6-(D-ribitylamino)uracil: step 1/2. Catalyzes the formation of 6,7-dimethyl-8-ribityllumazine by condensation of 5-amino-6-(D-ribitylamino)uracil with 3,4-dihydroxy-2-butanone 4-phosphate. This is the penultimate step in the biosynthesis of riboflavin. This Anoxybacillus flavithermus (strain DSM 21510 / WK1) protein is 6,7-dimethyl-8-ribityllumazine synthase.